A 245-amino-acid chain; its full sequence is Zinc finger protein 575 (245 aa).

The tract at residues 1-67 (MLERGAESAA…PPQRPHRCPD (67 aa)) is disordered. The segment covering 36 to 49 (PSQSAPGPTASAGS) has biased composition (low complexity). Residues 52-63 (RPRRRPPPQRPH) show a composition bias toward basic residues. 6 C2H2-type zinc fingers span residues 63-85 (HRCP…RLAH), 91-113 (HPCP…RLTH), 119-141 (HPCP…LWTH), 147-169 (YPCP…RHTH), 177-199 (YPCP…RLCH), and 213-240 (HRCS…QVEH).

This sequence belongs to the krueppel C2H2-type zinc-finger protein family.

It is found in the nucleus. Functionally, may be involved in transcriptional regulation. This is Zinc finger protein 575 (ZNF575) from Homo sapiens (Human).